A 245-amino-acid chain; its full sequence is 1-(5-phosphoribosyl)-5-[(5-phosphoribosylamino)methylideneamino] imidazole-4-carboxamide isomerase (245 aa).

Asp-7 (proton acceptor) is an active-site residue. Asp-129 acts as the Proton donor in catalysis.

It belongs to the HisA/HisF family.

It is found in the cytoplasm. It carries out the reaction 1-(5-phospho-beta-D-ribosyl)-5-[(5-phospho-beta-D-ribosylamino)methylideneamino]imidazole-4-carboxamide = 5-[(5-phospho-1-deoxy-D-ribulos-1-ylimino)methylamino]-1-(5-phospho-beta-D-ribosyl)imidazole-4-carboxamide. It functions in the pathway amino-acid biosynthesis; L-histidine biosynthesis; L-histidine from 5-phospho-alpha-D-ribose 1-diphosphate: step 4/9. This is 1-(5-phosphoribosyl)-5-[(5-phosphoribosylamino)methylideneamino] imidazole-4-carboxamide isomerase from Shewanella sp. (strain MR-7).